The chain runs to 428 residues: Histidine--tRNA ligase (428 aa).

The protein belongs to the class-II aminoacyl-tRNA synthetase family. Homodimer.

The protein resides in the cytoplasm. It carries out the reaction tRNA(His) + L-histidine + ATP = L-histidyl-tRNA(His) + AMP + diphosphate + H(+). The sequence is that of Histidine--tRNA ligase from Lactobacillus johnsonii (strain CNCM I-12250 / La1 / NCC 533).